Here is a 44-residue protein sequence, read N- to C-terminus: Photosystem I reaction center subunit IX (44 aa).

Residues 7-27 (YLSVAPVLATLWFGSLAGLLI) form a helical membrane-spanning segment.

The protein belongs to the PsaJ family.

It is found in the plastid. It localises to the chloroplast thylakoid membrane. In terms of biological role, may help in the organization of the PsaE and PsaF subunits. The chain is Photosystem I reaction center subunit IX from Piper cenocladum (Ant piper).